The primary structure comprises 286 residues: Glycine--tRNA ligase alpha subunit (286 aa).

This sequence belongs to the class-II aminoacyl-tRNA synthetase family. As to quaternary structure, tetramer of two alpha and two beta subunits.

The protein resides in the cytoplasm. The catalysed reaction is tRNA(Gly) + glycine + ATP = glycyl-tRNA(Gly) + AMP + diphosphate. The polypeptide is Glycine--tRNA ligase alpha subunit (Thermotoga neapolitana (strain ATCC 49049 / DSM 4359 / NBRC 107923 / NS-E)).